The following is a 247-amino-acid chain: O-methyltransferase imqG (247 aa).

S-adenosyl-L-methionine-binding positions include Glu-84, 86–87 (GT), and Ala-138. Residues Asp-163, Asp-189, and Asn-190 each contribute to the a divalent metal cation site. Asp-163 lines the substrate pocket.

This sequence belongs to the class I-like SAM-binding methyltransferase superfamily. Cation-dependent O-methyltransferase family. CCoAMT subfamily. As to quaternary structure, homodimer. The cofactor is a divalent metal cation.

It functions in the pathway secondary metabolite biosynthesis. O-methyltransferase; part of the gene cluster that mediates the biosynthesis of imizoquins A to D, tripeptide-derived alkaloids that serve a protective role against oxidative stress that are essential for normal germination. ImqB is a canonical three-module NRPS that assembles the tripeptide backbone of the imizoquins via condensation of Trp, Tyr, and Leu-derived precursors. N-methylation by imqF and phenol oxidation by imqC, followed by cyclization via the FAD-dependent oxidase imqH carry out the three-step transformation of L-tyrosine into tetrahydroisoquinoline. Importantly, this sequence requires the presence of a free amine in the tyrosine moiety, indicating that isoquinoline formation occurs prior to peptide bond formation. The imidazolidin-4-one ring of imizoquins could form following additional oxidation of the methyl-derived bridgehead carbon by imqH. Lastly, O-methylation by imqG and leucine hydroxylation by imqE complete biosynthesis of the imizoquins. The polypeptide is O-methyltransferase imqG (Aspergillus flavus (strain ATCC 200026 / FGSC A1120 / IAM 13836 / NRRL 3357 / JCM 12722 / SRRC 167)).